Here is a 193-residue protein sequence, read N- to C-terminus: uncharacterized protein (193 aa).

This is an uncharacterized protein from Mycoplasma pneumoniae (strain ATCC 29342 / M129 / Subtype 1) (Mycoplasmoides pneumoniae).